The following is a 615-amino-acid chain: Cysteine-rich receptor-like protein kinase 1 (615 aa).

Residues 1 to 28 (MQICASIAQFLAWVSFLVLLATVGSSSS) form the signal peptide. 2 consecutive Gnk2-homologous domains span residues 29–131 (SESL…DRDF) and 137–237 (DPTF…THKF). Residues 29-266 (SESLLNCQPL…SFFPHLSDRD (238 aa)) lie on the Extracellular side of the membrane. 2 N-linked (GlcNAc...) asparagine glycosylation sites follow: Asn100 and Asn165. A helical transmembrane segment spans residues 267-287 (VTRLAIAAISLSILTSLGAFI). At 288 to 615 (SYRRVSRKRK…VLMPDEETRV (328 aa)) the chain is on the cytoplasmic side. A Protein kinase domain is found at 318-602 (FHDSMKLGQG…FEYPKQPPFL (285 aa)). ATP contacts are provided by residues 324 to 332 (LGQGGAGSV) and Lys346. Asp443 functions as the Proton acceptor in the catalytic mechanism.

This sequence belongs to the protein kinase superfamily. Ser/Thr protein kinase family. CRK subfamily. Expressed in the whole plant at low levels.

It localises to the membrane. The enzyme catalyses L-seryl-[protein] + ATP = O-phospho-L-seryl-[protein] + ADP + H(+). It catalyses the reaction L-threonyl-[protein] + ATP = O-phospho-L-threonyl-[protein] + ADP + H(+). This Arabidopsis thaliana (Mouse-ear cress) protein is Cysteine-rich receptor-like protein kinase 1.